A 217-amino-acid chain; its full sequence is MYDDYLTIALSKGTLLEPTLEVFKKLKLPGEGINDKSRSMVFTYDNERVKYIMCRPTDVPTYVEQGAADLGIVGKDVIVEQARDVFEMVDLQYGYCRFVVAVPEAIKNITLKDLNYKRAATKFPVIAENFFRSQGLQVEIIKLHGNIELAPLMGLADMIVDLVSTGRTLKENRLVELIKIMDSTTRLICNRVSYRTKHQQIQPLIENMQKLSTGGSA.

It belongs to the ATP phosphoribosyltransferase family. Short subfamily. In terms of assembly, heteromultimer composed of HisG and HisZ subunits.

The protein resides in the cytoplasm. The enzyme catalyses 1-(5-phospho-beta-D-ribosyl)-ATP + diphosphate = 5-phospho-alpha-D-ribose 1-diphosphate + ATP. Its pathway is amino-acid biosynthesis; L-histidine biosynthesis; L-histidine from 5-phospho-alpha-D-ribose 1-diphosphate: step 1/9. Catalyzes the condensation of ATP and 5-phosphoribose 1-diphosphate to form N'-(5'-phosphoribosyl)-ATP (PR-ATP). Has a crucial role in the pathway because the rate of histidine biosynthesis seems to be controlled primarily by regulation of HisG enzymatic activity. This Syntrophomonas wolfei subsp. wolfei (strain DSM 2245B / Goettingen) protein is ATP phosphoribosyltransferase.